The primary structure comprises 25 residues: Antimicrobial peptide 3 (25 aa).

Skin.

It is found in the secreted. Has antibacterial activity against Gram-positive bacterium S.aureus and Gram-negative bacterium E.coli, when in combination with XT1 and XT6. The sequence is that of Antimicrobial peptide 3 from Xenopus tropicalis (Western clawed frog).